Here is a 370-residue protein sequence, read N- to C-terminus: ADP-ribosylation factor-like protein 13B (370 aa).

4 S-palmitoyl cysteine lipidation sites follow: cysteine 12, cysteine 13, cysteine 14, and cysteine 15. Residues glycine 31–threonine 38, aspartate 75–aspartate 79, and asparagine 134–asparagine 137 each bind GTP. A Glycyl lysine isopeptide (Lys-Gly) (interchain with G-Cter in SUMO) cross-link involves residue lysine 239. The disordered stretch occupies residues arginine 255–lysine 331. The span at proline 259–aspartate 271 shows a compositional bias: pro residues. Composition is skewed to polar residues over residues leucine 287–threonine 303 and arginine 314–asparagine 328. Lysine 331 participates in a covalent cross-link: Glycyl lysine isopeptide (Lys-Gly) (interchain with G-Cter in SUMO). Residues arginine 366–proline 369 form an RVVP region region.

It belongs to the small GTPase superfamily. Arf family. Monomer. Post-translationally, sumoylation regulates the targeting of membrane sensory receptors to the cilium. Specifically expressed in ciliated sensory neurons throughout development in both hermaphrodites.

Its subcellular location is the cell projection. It localises to the cilium membrane. Functionally, cilium-specific protein required to control the microtubule-based, ciliary axoneme structure. Required for normal sensory cilium function. May act by maintaining the association between IFT subcomplexes A and B. The chain is ADP-ribosylation factor-like protein 13B (arl-13) from Caenorhabditis elegans.